Here is a 218-residue protein sequence, read N- to C-terminus: Sodium channel regulatory subunit beta-1 (218 aa).

An N-terminal signal peptide occupies residues 1-18 (MGTLLAFVVGAALVSSAW). Residues 19-157 (GGCVEVDSET…DKANRDMASI (139 aa)) are Extracellular-facing. 2 cysteine pairs are disulfide-bonded: cysteine 21–cysteine 43 and cysteine 40–cysteine 121. The Ig-like C2-type domain occupies 22-150 (VEVDSETEAV…KIHLEVVDKA (129 aa)). N-linked (GlcNAc...) asparagine glycosylation is found at asparagine 93, asparagine 110, asparagine 114, and asparagine 135. Residues 158 to 179 (VSEIMMYVLIVVLTIWLVAEMV) traverse the membrane as a helical segment. Residues 180-218 (YCYKKIAAATEAAAQENASEYLAITSESKENCTGVQVAE) lie on the Cytoplasmic side of the membrane.

The protein belongs to the sodium channel auxiliary subunit SCN1B (TC 8.A.17) family. In terms of assembly, a voltage-gated sodium (Nav) channel consists of an ion-conducting pore-forming alpha subunit functional on its own that is regulated by one or more beta subunits. Interacts with SCN1A; regulatory subunit of SCN1A/Nav1.1. Interacts with SCN3A; regulatory subunit of SCN3A/Nav1.3. Interacts with SCN4A; regulatory subunit of SCN4A/Nav1.4. Interacts with SCN5A; regulatory subunit of SCN5A/Nav1.5. Interacts with SCN8A; regulatory subunit of SCN8A/Nav1.6. Interacts with SCN9A; regulatory subunit of SCN9A/Nav1.7. Interacts with SCN10A; regulatory subunit of SCN10A/Nav1.8. Interacts with NFASC. Interacts with TMEM65.

The protein resides in the cell membrane. It localises to the perikaryon. The protein localises to the cell projection. Its subcellular location is the axon. In terms of biological role, regulatory subunit of multiple voltage-gated sodium (Nav) channels directly mediating the depolarization of excitable membranes. Navs, also called VGSCs (voltage-gated sodium channels) or VDSCs (voltage-dependent sodium channels), operate by switching between closed and open conformations depending on the voltage difference across the membrane. In the open conformation they allow Na(+) ions to selectively pass through the pore, along their electrochemical gradient. The influx of Na+ ions provokes membrane depolarization, initiating the propagation of electrical signals throughout cells and tissues. The accessory beta subunits participate in localization and functional modulation of the Nav channels. Modulates the activity of SCN1A/Nav1.1, SCN2A/Nav1.2, SCN3A/Nav1.3, SCN4A/Nav1.4, SCN5A/Nav1.5, SCN8A/Nav1.6, SCN9A/Nav1.7 and SCN10A/Nav1.8. In Bos taurus (Bovine), this protein is Sodium channel regulatory subunit beta-1.